The primary structure comprises 432 residues: Adenylosuccinate synthetase (432 aa).

Residues 12 to 18 and 40 to 42 contribute to the GTP site; these read GDEGKGK and GHT. Asp13 (proton acceptor) is an active-site residue. Mg(2+)-binding residues include Asp13 and Gly40. IMP is bound by residues 13–16, 38–41, Thr129, Arg143, Gln224, Thr239, and Arg303; these read DEGK and NAGH. His41 serves as the catalytic Proton donor. 299–305 is a substrate binding site; the sequence is VTTGRRR. GTP-binding positions include Arg305, 331 to 333, and 413 to 415; these read KLD and GVG.

This sequence belongs to the adenylosuccinate synthetase family. In terms of assembly, homodimer. The cofactor is Mg(2+).

It localises to the cytoplasm. The enzyme catalyses IMP + L-aspartate + GTP = N(6)-(1,2-dicarboxyethyl)-AMP + GDP + phosphate + 2 H(+). It participates in purine metabolism; AMP biosynthesis via de novo pathway; AMP from IMP: step 1/2. Functionally, plays an important role in the de novo pathway of purine nucleotide biosynthesis. Catalyzes the first committed step in the biosynthesis of AMP from IMP. The protein is Adenylosuccinate synthetase of Mycobacterium avium (strain 104).